We begin with the raw amino-acid sequence, 361 residues long: Probable dual-specificity RNA methyltransferase RlmN (361 aa).

Catalysis depends on Glu91, which acts as the Proton acceptor. One can recognise a Radical SAM core domain in the interval 97 to 329 (QHYGLSVCVT…KKKGGNCVVR (233 aa)). Cys104 and Cys340 are joined by a disulfide. 3 residues coordinate [4Fe-4S] cluster: Cys111, Cys115, and Cys118. S-adenosyl-L-methionine contacts are provided by residues 163–164 (GE), Ser195, 218–220 (SLH), and Asn296. The active-site S-methylcysteine intermediate is Cys340.

The protein belongs to the radical SAM superfamily. RlmN family. It depends on [4Fe-4S] cluster as a cofactor.

The protein localises to the cytoplasm. It catalyses the reaction adenosine(2503) in 23S rRNA + 2 reduced [2Fe-2S]-[ferredoxin] + 2 S-adenosyl-L-methionine = 2-methyladenosine(2503) in 23S rRNA + 5'-deoxyadenosine + L-methionine + 2 oxidized [2Fe-2S]-[ferredoxin] + S-adenosyl-L-homocysteine. The catalysed reaction is adenosine(37) in tRNA + 2 reduced [2Fe-2S]-[ferredoxin] + 2 S-adenosyl-L-methionine = 2-methyladenosine(37) in tRNA + 5'-deoxyadenosine + L-methionine + 2 oxidized [2Fe-2S]-[ferredoxin] + S-adenosyl-L-homocysteine. Specifically methylates position 2 of adenine 2503 in 23S rRNA and position 2 of adenine 37 in tRNAs. This is Probable dual-specificity RNA methyltransferase RlmN from Streptococcus pneumoniae (strain P1031).